The primary structure comprises 427 residues: Glutamyl-tRNA(Gln) amidotransferase subunit D (427 aa).

Positions 1 to 18 (MTADPGDRVRVTHGDASH) are enriched in basic and acidic residues. Residues 1 to 20 (MTADPGDRVRVTHGDASHEG) are disordered. Residues 80–413 (PTIALISTGG…DDPEAAMQES (334 aa)) form the Asparaginase/glutaminase domain. Catalysis depends on residues T90, T166, D167, and K243.

This sequence belongs to the asparaginase 1 family. GatD subfamily. Heterodimer of GatD and GatE.

The enzyme catalyses L-glutamyl-tRNA(Gln) + L-glutamine + ATP + H2O = L-glutaminyl-tRNA(Gln) + L-glutamate + ADP + phosphate + H(+). Functionally, allows the formation of correctly charged Gln-tRNA(Gln) through the transamidation of misacylated Glu-tRNA(Gln) in organisms which lack glutaminyl-tRNA synthetase. The reaction takes place in the presence of glutamine and ATP through an activated gamma-phospho-Glu-tRNA(Gln). The GatDE system is specific for glutamate and does not act on aspartate. The polypeptide is Glutamyl-tRNA(Gln) amidotransferase subunit D (Halobacterium salinarum (strain ATCC 29341 / DSM 671 / R1)).